The sequence spans 244 residues: 3-deoxy-manno-octulosonate cytidylyltransferase (244 aa).

Belongs to the KdsB family.

Its subcellular location is the cytoplasm. The catalysed reaction is 3-deoxy-alpha-D-manno-oct-2-ulosonate + CTP = CMP-3-deoxy-beta-D-manno-octulosonate + diphosphate. It functions in the pathway nucleotide-sugar biosynthesis; CMP-3-deoxy-D-manno-octulosonate biosynthesis; CMP-3-deoxy-D-manno-octulosonate from 3-deoxy-D-manno-octulosonate and CTP: step 1/1. The protein operates within bacterial outer membrane biogenesis; lipopolysaccharide biosynthesis. Activates KDO (a required 8-carbon sugar) for incorporation into bacterial lipopolysaccharide in Gram-negative bacteria. This chain is 3-deoxy-manno-octulosonate cytidylyltransferase, found in Vesicomyosocius okutanii subsp. Calyptogena okutanii (strain HA).